Consider the following 159-residue polypeptide: Ribosomal RNA large subunit methyltransferase H (159 aa).

S-adenosyl-L-methionine contacts are provided by residues Leu76, Gly108, and 127–132 (FGRMTY).

It belongs to the RNA methyltransferase RlmH family. In terms of assembly, homodimer.

Its subcellular location is the cytoplasm. The catalysed reaction is pseudouridine(1915) in 23S rRNA + S-adenosyl-L-methionine = N(3)-methylpseudouridine(1915) in 23S rRNA + S-adenosyl-L-homocysteine + H(+). Its function is as follows. Specifically methylates the pseudouridine at position 1915 (m3Psi1915) in 23S rRNA. The chain is Ribosomal RNA large subunit methyltransferase H from Carboxydothermus hydrogenoformans (strain ATCC BAA-161 / DSM 6008 / Z-2901).